The primary structure comprises 84 residues: Small ribosomal subunit protein uS17 (84 aa).

This sequence belongs to the universal ribosomal protein uS17 family. As to quaternary structure, part of the 30S ribosomal subunit.

In terms of biological role, one of the primary rRNA binding proteins, it binds specifically to the 5'-end of 16S ribosomal RNA. This is Small ribosomal subunit protein uS17 from Clostridium novyi (strain NT).